A 3343-amino-acid chain; its full sequence is Breast cancer type 2 susceptibility protein homolog (3343 aa).

An interaction with PALB2 region spans residues 1 to 40 (MTVEYKRRPTFWEIFKARCSTADLGPISLNWFEELFSEAP). Residues 40 to 60 (PPYNTEHPEESEYKPQGHEPQ) form a disordered region. Over residues 45–56 (EHPEESEYKPQG) the composition is skewed to basic and acidic residues. Ser70 bears the Phosphoserine mark. Residues 348–381 (IEPRDSEPLDPSVTNQKPLYSQSGDISSEAGQCS) form a disordered region. Polar residues predominate over residues 359 to 381 (SVTNQKPLYSQSGDISSEAGQCS). Residues Ser475 and Ser736 each carry the phosphoserine modification. Positions 622-982 (PDSSIKRSNL…DKWSEFLDPL (361 aa)) are interaction with NPM1. BRCA2 repeat units follow at residues 984-1018 (NHKLGGSFRTASNKEIKLSEDNVKKSKMFFKDIEE), 1197-1231 (KEMEFGGFCSALGTKLSVSNEALRKAMKLFSDIEN), 1405-1439 (MKEFNISFQTASGKNIRVSKESLNKSVNILDQETE), 1503-1537 (KEPTLLSFHTASGKKVKIMQESLDKVKNLFDETQY), 1645-1669 (CYTGDSRKTCVGESSLSKGKKWLRE), 1828-1845 (FITTHSQETVRMKEIFTD), 1939-1973 (PSRTYGFFSTASGKAVQVSDASLEKARQVFSEIDG), and 2019-2053 (SSFVFSGFSTAGGKLVTVSESALHKVKGMLEEFDL). Residues 985 to 2050 (HKLGGSFRTA…LHKVKGMLEE (1066 aa)) form an interaction with RAD51 region. Disordered stretches follow at residues 2059 to 2138 (TLQH…VLGT), 2297 to 2356 (PFCS…SDKS), and 2377 to 2407 (DSKNVNLEGKNQKSADGVSEDGNDSDFPQFN). The residue at position 2063 (Ser2063) is a Phosphoserine. Composition is skewed to polar residues over residues 2083–2094 (PEYSVSSKLQKT) and 2101–2125 (SPSNYKESGSSGNTQSLEVSPQLSQ). Residues 2233 to 2300 (RKRGGMAGVA…EPVTCGPFCS (68 aa)) are interaction with HSF2BP. Polar residues-rich tracts occupy residues 2307–2320 (TQSPHVTSPAQGLQ) and 2332–2342 (GKSSSNPTVSA). The interval 2313 to 2475 (TSPAQGLQSK…SPKQLYMYGV (163 aa)) is interaction with FANCD2. Residues 2344–2356 (RSERTRHSVSDKS) are compositionally biased toward basic and acidic residues. Residues 2411-2762 (MSSLQNARDL…QRVYPLQWVE (352 aa)) form an interaction with SEM1 region. The short motif at 2612 to 2628 (AAKTLVLCVSDIISLST) is the Nuclear export signal; masked by interaction with SEM1 element. Residues 3114–3163 (DSPKWSTPNKDPTREPYPASTCSASDLASGGQLPRSSPTDQQSYRSPLSC) form a disordered region. The span at 3147–3163 (PRSSPTDQQSYRSPLSC) shows a compositional bias: polar residues. Residue Ser3222 is modified to Phosphoserine; by CDK1 and CDK2. 2 disordered regions span residues 3231–3255 (PPRSCGTKYPTPLKKEGPSSPWSRA) and 3289–3343 (VGGS…PDYS). A Phosphoserine modification is found at Ser3250. Positions 3295 to 3310 (VFPSDSTRTEGPSAST) are enriched in polar residues. Residues 3318–3334 (SKRESLRDCRDDSDGKL) are compositionally biased toward basic and acidic residues.

Monomer and dimer. Interacts with RAD51; regulates RAD51 recruitment and function at sites of DNA repair. Interacts with SEM1, WDR16, USP11, DMC1, ROCK2 and NPM1. Interacts with both nonubiquitinated and monoubiquitinated FANCD2; this complex also includes XRCC3 and phosphorylated FANCG. Part of a BRCA complex containing BRCA1, BRCA2 and PALB2. Component of the homologous recombination repair (HR) complex composed of ERCC5/XPG, BRCA2, PALB2, DSS1 and RAD51. Within the complex, interacts with ERCC5/XPG and PALB2. Interacts directly with PALB2 which may serve as a scaffold for a HR complex containing PALB2, BRCA2, RAD51C, RAD51 and XRCC3. Interacts with BRCA1 only in the presence of PALB2 which serves as the bridging protein. Interacts with POLH; the interaction is direct. Interacts with the TREX-2 complex subunits PCID2 and SEM1. Interacts with HSF2BP and BRME1; the interaction with HSF2BP is direct and allows the formation of a ternary complex. The complex BRME1:HSF2BP:BRCA2 interacts with SPATA22, MEIOB and RAD51. In terms of processing, phosphorylated by ATM upon irradiation-induced DNA damage. Phosphorylation by CHEK1 and CHEK2 regulates interaction with RAD51. Phosphorylation at Ser-3222 by CDK1 and CDK2 is low in S phase when recombination is active, but increases as cells progress towards mitosis; this phosphorylation prevents homologous recombination-dependent repair during S phase and G2 by inhibiting RAD51 binding. Post-translationally, ubiquitinated in the absence of DNA damage; this does not lead to proteasomal degradation. In contrast, ubiquitination in response to DNA damage leads to proteasomal degradation. Highest expression in testis. Also expressed in spleen, skeletal muscle, thymus, mammary gland, heart, ovary, prostate, liver, lung, kidney and brain.

It is found in the nucleus. The protein localises to the cytoplasm. It localises to the cytoskeleton. The protein resides in the microtubule organizing center. Its subcellular location is the centrosome. In terms of biological role, involved in double-strand break repair and/or homologous recombination. Binds RAD51 and potentiates recombinational DNA repair by promoting assembly of RAD51 onto single-stranded DNA (ssDNA). Acts by targeting RAD51 to ssDNA over double-stranded DNA, enabling RAD51 to displace replication protein-A (RPA) from ssDNA and stabilizing RAD51-ssDNA filaments by blocking ATP hydrolysis. Part of a PALB2-scaffolded HR complex containing RAD51C and which is thought to play a role in DNA repair by HR. May participate in S phase checkpoint activation. Binds selectively to ssDNA, and to ssDNA in tailed duplexes and replication fork structures. May play a role in the extension step after strand invasion at replication-dependent DNA double-strand breaks; together with PALB2 is involved in both POLH localization at collapsed replication forks and DNA polymerization activity. In concert with NPM1, regulates centrosome duplication. Interacts with the TREX-2 complex (transcription and export complex 2) subunits PCID2 and SEM1, and is required to prevent R-loop-associated DNA damage and thus transcription-associated genomic instability, independently of its known role in homologous recombination. The protein is Breast cancer type 2 susceptibility protein homolog of Rattus norvegicus (Rat).